Here is a 234-residue protein sequence, read N- to C-terminus: Small ribosomal subunit protein uS2 (234 aa).

It belongs to the universal ribosomal protein uS2 family.

The protein is Small ribosomal subunit protein uS2 of Prochlorococcus marinus subsp. pastoris (strain CCMP1986 / NIES-2087 / MED4).